Consider the following 437-residue polypeptide: Histidine--tRNA ligase (437 aa).

It belongs to the class-II aminoacyl-tRNA synthetase family. Homodimer.

It localises to the cytoplasm. The enzyme catalyses tRNA(His) + L-histidine + ATP = L-histidyl-tRNA(His) + AMP + diphosphate + H(+). The chain is Histidine--tRNA ligase from Leptospira biflexa serovar Patoc (strain Patoc 1 / Ames).